Reading from the N-terminus, the 1068-residue chain is Rho family-interacting cell polarization regulator 2 (1068 aa).

Ser21 and Ser37 each carry phosphoserine; in isoform. The tract at residues 45 to 73 is disordered; it reads LKKPQAKLKKMHNLGHKNNNPPKEPQPKR. Positions 48 to 59 are enriched in basic residues; it reads PQAKLKKMHNLG. The tract at residues 55 to 113 is involved in cell filopodia formation; sequence MHNLGHKNNNPPKEPQPKRVEEVYRALKNGLDEYLEVHQTELDKLTAQLKDMKRNSRLG. A coiled-coil region spans residues 83–112; the sequence is NGLDEYLEVHQTELDKLTAQLKDMKRNSRL. Ser341 bears the Phosphoserine; in isoform 2 mark. Residues 474–491 show a composition bias toward polar residues; the sequence is QNEGMDDTSSASSRNSLG. Positions 474–524 are disordered; sequence QNEGMDDTSSASSRNSLGEGQEPKSHLKEEDPEEPRKPASAPSEACRRQSS. A compositionally biased stretch (basic and acidic residues) spans 494 to 510; that stretch reads QEPKSHLKEEDPEEPRK. At Ser523 the chain carries Phosphoserine; in isoform 2. Ser573 carries the phosphoserine modification. Position 585 is a phosphoserine; in isoform 2 (Ser585). Residues 768-793 adopt a coiled-coil conformation; sequence VARSLLEKLSRQIQVMEKLAAVSDEN.

This sequence belongs to the RIPOR family. In terms of assembly, homooligomer; homooligomerization is regulated by RHOC and leads to the formation of concatemers through the association of N- and C-termini. Interacts with 14-3-3 proteins; these interactions occur during myogenic cell differentiation. Interacts with HDAC6; this interaction occurs during early myogenic differentiation and prevents HDAC6 to deacetylate tubulin. Interacts with DYSF; this interaction occurs during early myogenic differentiation. Interacts with MYOF. Interacts with RHOC. Isoform 1 and isoform 2 interact (via active GTP- or inactive GDP-bound forms) with RHOA; these interactions are direct, block the loading of GTP to RHOA and decrease upon chemokine CCL19 stimulation in primary T lymphocytes. Isoform 2 interacts (phosphorylated form) with HDAC6; this interaction induces T cell proliferation arrest. Isoform 2 interacts (phosphorylated form) with 14-3-3 proteins; these interactions induces T cell proliferation arrest. Isoform 2 interacts with 14-3-3 proteins. Isoform 2 interacts (via phosphorylated form) with YWHAB; this interaction occurs in a chemokine-dependent manner and does not compete for binding of RIPOR2 with RHOA nor blocks inhibition of RIPOR2-mediated RHOA activity. Isoform 2 interacts with YWHAE. Isoform 2 interacts with YWHAQ. Post-translationally, phosphorylated. Isoform 2 is phosphorylated in T cells. Chemokine-induced phosphorylation of isoform 2 in neutrophils occurs in a PKC- and AKT-dependent manner, resulting in RIPOR2 interaction with YWHAB and stabilization. Isoform 2 is phosphorylated by PKCA, AKT1 and MAPKAPK1A; in vitro. Acetylated during myogenic differentiation. In terms of tissue distribution, expressed in primary fetal mononuclear myoblast. Expressed strongly in naive T lymphocytes. Expressed weakly in activated T lymphocytes (at protein level). Expressed in blood cells and adult tissues of hematopoietic origin, such as the secondary lymphoid organs. Expressed in cytotrophoblast.

The protein localises to the cytoplasm. It localises to the cytoskeleton. The protein resides in the cell projection. It is found in the filopodium. Its subcellular location is the stereocilium. The protein localises to the stereocilium membrane. It localises to the apical cell membrane. In terms of biological role, acts as an inhibitor of the small GTPase RHOA and plays several roles in the regulation of myoblast and hair cell differentiation, lymphocyte T proliferation and neutrophil polarization. Inhibits chemokine-induced T lymphocyte responses, such as cell adhesion, polarization and migration. Involved also in the regulation of neutrophil polarization, chemotaxis and adhesion. Required for normal development of inner and outer hair cell stereocilia within the cochlea of the inner ear. Plays a role for maintaining the structural organization of the basal domain of stereocilia. Involved in mechanosensory hair cell function. Required for normal hearing. Acts as an inhibitor of the small GTPase RHOA. Plays a role in fetal mononuclear myoblast differentiation by promoting filopodia and myotube formation. Maintains naive T lymphocytes in a quiescent state. This is Rho family-interacting cell polarization regulator 2 (RIPOR2) from Homo sapiens (Human).